The sequence spans 67 residues: Large ribosomal subunit protein bL35 (67 aa).

Residues 1-32 (MPKLKNHSGAKKRFAKTATGKYKRRKAGRKHL) show a composition bias toward basic residues. Residues 1–54 (MPKLKNHSGAKKRFAKTATGKYKRRKAGRKHLLTPQSGSRKREMRQTGIIKPES) form a disordered region.

This sequence belongs to the bacterial ribosomal protein bL35 family.

This chain is Large ribosomal subunit protein bL35, found in Elusimicrobium minutum (strain Pei191).